A 120-amino-acid chain; its full sequence is Small ribosomal subunit protein bS16 (120 aa).

The tract at residues 84–120 (KRESRNNPQQGQPKKKAQERAAAAAAAAEKAASEAAA) is disordered. Positions 103 to 120 (RAAAAAAAAEKAASEAAA) are enriched in low complexity.

The protein belongs to the bacterial ribosomal protein bS16 family.

This chain is Small ribosomal subunit protein bS16, found in Beijerinckia indica subsp. indica (strain ATCC 9039 / DSM 1715 / NCIMB 8712).